We begin with the raw amino-acid sequence, 608 residues long: Albumin (608 aa).

Residues methionine 1–serine 18 form the signal peptide. Positions arginine 19 to arginine 24 are excised as a propeptide. Albumin domains follow at residues arginine 19–glutamate 211, lysine 212–proline 403, and leucine 404–threonine 601. Histidine 27 contributes to the Cu cation binding site. Serine 29 bears the Phosphoserine mark. Positions 30 and 37 each coordinate Ca(2+). Cysteines 77 and 86 form a disulfide. Serine 82 and serine 89 each carry phosphoserine. Histidine 91 serves as a coordination point for Zn(2+). 6 disulfides stabilise this stretch: cysteine 99/cysteine 115, cysteine 114/cysteine 125, cysteine 148/cysteine 193, cysteine 192/cysteine 201, cysteine 224/cysteine 270, and cysteine 269/cysteine 277. An N6-succinyllysine modification is found at lysine 229. Glutamate 268 contacts Ca(2+). Histidine 271 and aspartate 273 together coordinate Zn(2+). 3 residues coordinate Ca(2+): aspartate 273, glutamate 276, and aspartate 279. 8 disulfide bridges follow: cysteine 289-cysteine 303, cysteine 302-cysteine 313, cysteine 340-cysteine 385, cysteine 384-cysteine 393, cysteine 416-cysteine 462, cysteine 461-cysteine 472, cysteine 485-cysteine 501, and cysteine 500-cysteine 511. The residue at position 297 (serine 297) is a Phosphoserine. A Phosphoserine modification is found at serine 443. A phosphothreonine mark is found at threonine 444 and threonine 446. The residue at position 460 (lysine 460) is an N6-succinyllysine. Position 513 is a phosphoserine (serine 513). 2 disulfides stabilise this stretch: cysteine 538-cysteine 583 and cysteine 582-cysteine 591. An N6-succinyllysine modification is found at lysine 543. Position 558 is an N6-methyllysine (lysine 558). Threonine 570 is subject to Phosphothreonine. Lysine 588 is subject to N6-succinyllysine.

This sequence belongs to the ALB/AFP/VDB family. Part of a complex composed of complement component C3, CLCA1/CLCA3, A2ML1/OH and ALB/serum albumin. Interacts with FCGRT; this interaction regulates ALB homeostasis. Interacts with TASOR. In plasma, occurs in a covalently-linked complex with chromophore-bound alpha-1-microglobulin; this interaction does not prevent fatty acid binding to ALB. Phosphorylated by FAM20C in the extracellular medium. As to expression, plasma. Expressed in the granular cells within the cerebellum.

It is found in the secreted. Binds water, Ca(2+), Na(+), K(+), fatty acids, hormones, bilirubin and drugs. Its main function is the regulation of the colloidal osmotic pressure of blood. Major zinc transporter in plasma, typically binds about 80% of all plasma zinc. Major calcium and magnesium transporter in plasma, binds approximately 45% of circulating calcium and magnesium in plasma. Potentially has more than two calcium-binding sites and might additionally bind calcium in a non-specific manner. The shared binding site between zinc and calcium at residue Asp-273 suggests a crosstalk between zinc and calcium transport in the blood. The rank order of affinity is zinc &gt; calcium &gt; magnesium. Binds to the bacterial siderophore enterobactin and inhibits enterobactin-mediated iron uptake of E.coli from ferric transferrin, and may thereby limit the utilization of iron and growth of enteric bacteria such as E.coli. Does not prevent iron uptake by the bacterial siderophore aerobactin. This is Albumin (Alb) from Mus musculus (Mouse).